We begin with the raw amino-acid sequence, 352 residues long: fMet-Leu-Phe receptor (352 aa).

At 1 to 27 the chain is on the extracellular side; that stretch reads MDSNASLPLNVSGGTQATPAGLVVLDV. Residues asparagine 4 and asparagine 10 are each glycosylated (N-linked (GlcNAc...) asparagine). Residues 28–50 traverse the membrane as a helical segment; the sequence is FSYLILVVTFVLGVLGNGLVIWV. Topologically, residues 51–61 are cytoplasmic; the sequence is TGFRMTHTVTT. A helical membrane pass occupies residues 62 to 83; it reads ISYLNLALADFSFTSTLPFFIV. The Extracellular segment spans residues 84 to 100; sequence TKALGGHWPFGWFLCKF. Cysteine 98 and cysteine 178 are joined by a disulfide. Residues 101 to 121 form a helical membrane-spanning segment; the sequence is VFTIVDINLFGSVFLIALIAL. At 122-140 the chain is on the cytoplasmic side; sequence DRCICVLHPVWAQNHRNVS. A helical membrane pass occupies residues 141 to 162; that stretch reads LAKKVIVGPWICALLLTLPVII. At 163-207 the chain is on the extracellular side; the sequence is RVTTLSHPRAPGKMACTFDWSPWTEDPAEKLKVAISMFMVRGIIR. The chain crosses the membrane as a helical span at residues 208 to 228; it reads FIIGFSTPMSIVAVCYGLIAT. The Cytoplasmic portion of the chain corresponds to 229 to 244; sequence KIHRQGLIKSSRPLRV. A helical transmembrane segment spans residues 245 to 268; that stretch reads LSFVVASFLLCWSPYQIAALIATV. Residues 269–287 are Extracellular-facing; sequence RIRELLLGMGKDLRIVLDV. A helical transmembrane segment spans residues 288-307; sequence TSFVAFFNSCLNPMLYVFMG. Over 308–352 the chain is Cytoplasmic; it reads QDFRERLIHSLPASLERALSEDSAQTSDTGTNSTSAPAEAELQAI.

Belongs to the G-protein coupled receptor 1 family. Post-translationally, phosphorylated; which is necessary for desensitization. As to expression, neutrophils.

The protein localises to the cell membrane. Its function is as follows. High affinity receptor for N-formyl-methionyl peptides (fMLP), which are powerful neutrophil chemotactic factors. Binding of fMLP to the receptor stimulates intracellular calcium mobilization and superoxide anion release. This response is mediated via a G-protein that activates a phosphatidylinositol-calcium second messenger system. Receptor for TAFA4, mediates its effects on chemoattracting macrophages, promoting phagocytosis and increasing ROS release. Receptor for cathepsin CTSG, leading to increased phagocyte chemotaxis. The chain is fMet-Leu-Phe receptor (FPR1) from Oryctolagus cuniculus (Rabbit).